Consider the following 935-residue polypeptide: Progesterone receptor (935 aa).

The tract at residues 1-164 (MTELKAKGPR…PATQGVLSPL (164 aa)) is AF3; mediates transcriptional activation. Residues 1 to 254 (MTELKAKGPR…GGAAAGGGAA (254 aa)) form a disordered region. The modulating, Pro-Rich stretch occupies residues 1 to 568 (MTELKAKGPR…YSFESLPQKI (568 aa)). Phosphoserine is present on Ser20. Residues 55–59 (LDGLL) carry the LXXL motif 1 motif. Ser81 bears the Phosphoserine mark. The LXXL motif 2 motif lies at 115-119 (LDTLL). Residues Ser130 and Ser162 each carry the phosphoserine modification. The tract at residues 165–305 (MSRSGGKAGD…LATTVMDFIH (141 aa)) is mediates transcriptional transrepression. The short motif at 183-187 (KVLPR) is the Nuclear localization signal element. Phosphoserine occurs at positions 190 and 213. A compositionally biased stretch (acidic residues) spans 220–231 (EVEEEDGSESED). Low complexity predominate over residues 232 to 246 (SAGPLLKGKPRALGG). Ser294 carries the phosphoserine; by MAPK1 modification. Residues 331-378 (GGAGAASAFAPPRSSPSASSTPVAVGDFPDCAYPPDAEPKDDAYPLYS) are disordered. Low complexity predominate over residues 335–350 (AASAFAPPRSSPSASS). Position 345 is a phosphoserine; by MAPK (Ser345). Lys388 participates in a covalent cross-link: Glycyl lysine isopeptide (Lys-Gly) (interchain with G-Cter in SUMO); alternate. A Glycyl lysine isopeptide (Lys-Gly) (interchain with G-Cter in ubiquitin); alternate cross-link involves residue Lys388. The residue at position 400 (Ser400) is a Phosphoserine; by CDK2. Residues 418-430 (PLGPPPPLPPRAP) are compositionally biased toward pro residues. The disordered stretch occupies residues 418 to 438 (PLGPPPPLPPRAPPTRAGEAA). Residues 456–548 (STLECILYKA…VYPPYLNYLR (93 aa)) are AF1; mediates transcriptional activation. Lys533 participates in a covalent cross-link: Glycyl lysine isopeptide (Lys-Gly) (interchain with G-Cter in SUMO). 2 consecutive NR C4-type zinc fingers follow at residues 569-589 (CLIC…CGSC) and 605-629 (CAGR…LRKC). The nuclear receptor DNA-binding region spans 569–641 (CLICGDEASG…AGMVLGGRKF (73 aa)). Ser678 is subject to Phosphoserine. Residues 681-915 (QDIQLIPPLI…EFPEMMSEVI (235 aa)) form the NR LBD domain. The AF2; mediates transcriptional activation stretch occupies residues 689–935 (LINLLMSIEP…MVKPLLFHKK (247 aa)).

It belongs to the nuclear hormone receptor family. In terms of assembly, interacts with SMARD1 and UNC45A. Interacts with CUEDC2; the interaction promotes ubiquitination, decreases sumoylation, and represses transcriptional activity. Interacts with PIAS3; the interaction promotes sumoylation of PR in a hormone-dependent manner, inhibits DNA-binding, and alters nuclear export. Interacts with SP1; the interaction requires ligand-induced phosphorylation on Ser-345 by ERK1/2-MAPK. Interacts with PRMT2. Interacts with NCOA2 and NCOA1. Interacts with KLF9. Interacts with GTF2B. In terms of processing, phosphorylated on multiple serine sites. Several of these sites are hormone-dependent. Phosphorylation on Ser-294 is highly hormone-dependent and modulates ubiquitination and sumoylation on Lys-388. Phosphorylation on Ser-102 and Ser-345 also requires induction by hormone. Basal phosphorylation on Ser-81, Ser-162, Ser-190 and Ser-400 is increased in response to progesterone and can be phosphorylated in vitro by the CDK2-A1 complex. Increased levels of phosphorylation on Ser-400 also in the presence of EGF, heregulin, IGF, PMA and FBS. Phosphorylation at this site by CDK2 is ligand-independent, and increases nuclear translocation and transcriptional activity. Phosphorylation at Ser-162 and Ser-294, but not at Ser-190, is impaired during the G(2)/M phase of the cell cycle. Phosphorylation on Ser-345 by ERK1/2 MAPK is required for interaction with SP1. Post-translationally, sumoylation is hormone-dependent and represses transcriptional activity. Sumoylation on all three sites is enhanced by PIAS3. Desumoylated by SENP1. Sumoylation on Lys-388, the main site of sumoylation, is repressed by ubiquitination on the same site, and modulated by phosphorylation at Ser-294. Ubiquitination is hormone-dependent and represses sumoylation on the same site. Promoted by MAPK-mediated phosphorylation on Ser-294. In terms of processing, palmitoylated by ZDHHC7 and ZDHHC21. Palmitoylation is required for plasma membrane targeting and for rapid intracellular signaling via ERK and AKT kinases and cAMP generation.

It localises to the nucleus. It is found in the cytoplasm. Functionally, the steroid hormones and their receptors are involved in the regulation of eukaryotic gene expression and affect cellular proliferation and differentiation in target tissues. Transcriptional activator of several progesteron-dependent promoters in a variety of cell types. Involved in activation of SRC-dependent MAPK signaling on hormone stimulation. This Pongo pygmaeus (Bornean orangutan) protein is Progesterone receptor (PGR).